A 245-amino-acid polypeptide reads, in one-letter code: Orotidine 5'-phosphate decarboxylase (245 aa).

Substrate is bound by residues aspartate 22, lysine 44, aspartate 71–threonine 80, threonine 131, arginine 192, glutamine 201, glycine 221, and arginine 222. The active-site Proton donor is the lysine 73.

The protein belongs to the OMP decarboxylase family. Type 1 subfamily. In terms of assembly, homodimer.

It catalyses the reaction orotidine 5'-phosphate + H(+) = UMP + CO2. It participates in pyrimidine metabolism; UMP biosynthesis via de novo pathway; UMP from orotate: step 2/2. Its function is as follows. Catalyzes the decarboxylation of orotidine 5'-monophosphate (OMP) to uridine 5'-monophosphate (UMP). In Yersinia pestis bv. Antiqua (strain Antiqua), this protein is Orotidine 5'-phosphate decarboxylase.